We begin with the raw amino-acid sequence, 84 residues long: Translational regulator CsrA (84 aa).

Belongs to the CsrA/RsmA family. In terms of assembly, homodimer; the beta-strands of each monomer intercalate to form a hydrophobic core, while the alpha-helices form wings that extend away from the core.

The protein localises to the cytoplasm. Its function is as follows. A translational regulator that binds mRNA to regulate translation initiation and/or mRNA stability. Usually binds in the 5'-UTR at or near the Shine-Dalgarno sequence preventing ribosome-binding, thus repressing translation. Its main target seems to be the major flagellin gene, while its function is anatagonized by FliW. This chain is Translational regulator CsrA, found in Leptospira interrogans serogroup Icterohaemorrhagiae serovar Lai (strain 56601).